Reading from the N-terminus, the 645-residue chain is Protein LHY (645 aa).

S6 carries the post-translational modification Phosphoserine. An HTH myb-type domain is found at 19-73 (TITKQRERWTEDEHERFLEALRLYGRAWQRIEEHIGTKTAVQIRSHAQKFFTKLE). Positions 46 to 69 (WQRIEEHIGTKTAVQIRSHAQKFF) form a DNA-binding region, H-T-H motif. Disordered regions lie at residues 89–127 (IEIPPPRPKRKPNTPYPRKPGNNGTSSSQVSSAKDAKLV), 149–212 (EKTS…GTTV), 410–437 (QNLASKSPASSSDDSDETGVTKLNADSK), and 458–500 (AQKK…TDEN). Residues 110–120 (NNGTSSSQVSS) are compositionally biased toward polar residues. The segment covering 149–158 (EKTSTGKENQ) has biased composition (basic and acidic residues). The segment covering 159–169 (DENCSGVSTVN) has biased composition (polar residues). Residues 197-207 (VPKKNKDKDGN) show a composition bias toward basic and acidic residues. Over residues 468-478 (SCGSNTPSGSD) the composition is skewed to polar residues. Over residues 483–498 (ALDKMEKDKEDVKETD) the composition is skewed to basic and acidic residues.

Homodimer or heterodimer with CCA1. Interacts with CCA1 (via internal domain); independently of photoperiod. Functions probably as part of a large complex. Interacts with CKB1 and CKB3. Interacts with LNK1 and LNK2. Phosphorylated by CK2. In terms of tissue distribution, expressed in leaves, roots, stems, flowers and siliques.

It is found in the nucleus. Functionally, transcription factor involved in the circadian clock. Binds to the promoter region of APRR1/TOC1 and TCP21/CHE to repress their transcription. Represses both CCA1 and itself. May recognize the promoter of JMJ14 to regulates its expression during the night in a circadian manner. The chain is Protein LHY from Arabidopsis thaliana (Mouse-ear cress).